The sequence spans 216 residues: Octanoyltransferase (216 aa).

In terms of domain architecture, BPL/LPL catalytic spans 32–207 (SDSQDELWIV…TFSQIMGYQQ (176 aa)). Residues 71–78 (RGGQVTYH), 138–140 (SLG), and 151–153 (GLA) each bind substrate. Cys-169 functions as the Acyl-thioester intermediate in the catalytic mechanism.

This sequence belongs to the LipB family.

The protein resides in the cytoplasm. The enzyme catalyses octanoyl-[ACP] + L-lysyl-[protein] = N(6)-octanoyl-L-lysyl-[protein] + holo-[ACP] + H(+). It participates in protein modification; protein lipoylation via endogenous pathway; protein N(6)-(lipoyl)lysine from octanoyl-[acyl-carrier-protein]: step 1/2. Functionally, catalyzes the transfer of endogenously produced octanoic acid from octanoyl-acyl-carrier-protein onto the lipoyl domains of lipoate-dependent enzymes. Lipoyl-ACP can also act as a substrate although octanoyl-ACP is likely to be the physiological substrate. The protein is Octanoyltransferase of Shewanella frigidimarina (strain NCIMB 400).